The sequence spans 95 residues: Small ribosomal subunit protein bS16 (95 aa).

The protein belongs to the bacterial ribosomal protein bS16 family.

In Thermosipho melanesiensis (strain DSM 12029 / CIP 104789 / BI429), this protein is Small ribosomal subunit protein bS16.